The following is a 197-amino-acid chain: MPIGVPKVPYRMPGGQFTDWISIYDRLYRERIIFLGRDVDDEIANQIIAVMLYLDSEDPGKDIYLYINSPGGMVTSGLAIYDTMQHIKSDVVTICVGLAASMGSFLLAAGTKGKRLALPHSRIMIHQPSGGTRGQATDIEIEAREILRIRHQLNQIYANNTNQPLAKIEKDMDRDFFMSAQEAKEYGLIDRVIEERI.

The active-site Nucleophile is Ser-101. The active site involves His-126.

Belongs to the peptidase S14 family. In terms of assembly, fourteen ClpP subunits assemble into 2 heptameric rings which stack back to back to give a disk-like structure with a central cavity, resembling the structure of eukaryotic proteasomes.

Its subcellular location is the cytoplasm. It catalyses the reaction Hydrolysis of proteins to small peptides in the presence of ATP and magnesium. alpha-casein is the usual test substrate. In the absence of ATP, only oligopeptides shorter than five residues are hydrolyzed (such as succinyl-Leu-Tyr-|-NHMec, and Leu-Tyr-Leu-|-Tyr-Trp, in which cleavage of the -Tyr-|-Leu- and -Tyr-|-Trp bonds also occurs).. Its function is as follows. Cleaves peptides in various proteins in a process that requires ATP hydrolysis. Has a chymotrypsin-like activity. Plays a major role in the degradation of misfolded proteins. This chain is ATP-dependent Clp protease proteolytic subunit 2, found in Trichormus variabilis (strain ATCC 29413 / PCC 7937) (Anabaena variabilis).